The chain runs to 243 residues: Ubiquinone/menaquinone biosynthesis C-methyltransferase UbiE (243 aa).

S-adenosyl-L-methionine is bound by residues Thr-69, Asp-90, and 116–117 (DA).

The protein belongs to the class I-like SAM-binding methyltransferase superfamily. MenG/UbiE family.

It carries out the reaction a 2-demethylmenaquinol + S-adenosyl-L-methionine = a menaquinol + S-adenosyl-L-homocysteine + H(+). It catalyses the reaction a 2-methoxy-6-(all-trans-polyprenyl)benzene-1,4-diol + S-adenosyl-L-methionine = a 5-methoxy-2-methyl-3-(all-trans-polyprenyl)benzene-1,4-diol + S-adenosyl-L-homocysteine + H(+). It functions in the pathway quinol/quinone metabolism; menaquinone biosynthesis; menaquinol from 1,4-dihydroxy-2-naphthoate: step 2/2. It participates in cofactor biosynthesis; ubiquinone biosynthesis. Its function is as follows. Methyltransferase required for the conversion of demethylmenaquinol (DMKH2) to menaquinol (MKH2) and the conversion of 2-polyprenyl-6-methoxy-1,4-benzoquinol (DDMQH2) to 2-polyprenyl-3-methyl-6-methoxy-1,4-benzoquinol (DMQH2). This chain is Ubiquinone/menaquinone biosynthesis C-methyltransferase UbiE, found in Burkholderia multivorans (strain ATCC 17616 / 249).